Here is a 449-residue protein sequence, read N- to C-terminus: D-inositol 3-phosphate glycosyltransferase (449 aa).

His43 contacts 1D-myo-inositol 3-phosphate. Residues 49–50 (QP) and Gly57 contribute to the UDP-N-acetyl-alpha-D-glucosamine site. 1D-myo-inositol 3-phosphate is bound by residues 54–59 (DAGGMN), Lys112, Tyr145, Thr169, and Arg189. UDP-N-acetyl-alpha-D-glucosamine-binding residues include Arg263, Lys268, and Gln324. Mg(2+)-binding residues include Tyr333, Arg334, and Ala336. The UDP-N-acetyl-alpha-D-glucosamine site is built by Glu346 and Glu354. Thr360 is a binding site for Mg(2+).

It belongs to the glycosyltransferase group 1 family. MshA subfamily. In terms of assembly, homodimer.

It catalyses the reaction 1D-myo-inositol 3-phosphate + UDP-N-acetyl-alpha-D-glucosamine = 1D-myo-inositol 2-acetamido-2-deoxy-alpha-D-glucopyranoside 3-phosphate + UDP + H(+). Catalyzes the transfer of a N-acetyl-glucosamine moiety to 1D-myo-inositol 3-phosphate to produce 1D-myo-inositol 2-acetamido-2-deoxy-glucopyranoside 3-phosphate in the mycothiol biosynthesis pathway. This Segniliparus rotundus (strain ATCC BAA-972 / CDC 1076 / CIP 108378 / DSM 44985 / JCM 13578) protein is D-inositol 3-phosphate glycosyltransferase.